The chain runs to 437 residues: Enolase 1 (437 aa).

K60 is covalently cross-linked (Glycyl lysine isopeptide (Lys-Gly) (interchain with G-Cter in ubiquitin)). 2 positions are modified to phosphoserine: S119 and S138. Substrate-binding residues include H160 and E169. S188 carries the phosphoserine modification. Residue E212 is the Proton donor of the active site. A Glycyl lysine isopeptide (Lys-Gly) (interchain with G-Cter in ubiquitin) cross-link involves residue K243. Mg(2+) is bound by residues D247 and E296. Residue E296 coordinates substrate. T313 is subject to Phosphothreonine. D321 provides a ligand contact to substrate. Residue D321 coordinates Mg(2+). A Phosphothreonine modification is found at T324. K346 serves as the catalytic Proton acceptor. K358 participates in a covalent cross-link: Glycyl lysine isopeptide (Lys-Gly) (interchain with G-Cter in ubiquitin). Residues 373 to 376 (SHRS) and K397 each bind substrate.

It belongs to the enolase family. Homodimer. It depends on Mg(2+) as a cofactor.

It is found in the cytoplasm. It catalyses the reaction (2R)-2-phosphoglycerate = phosphoenolpyruvate + H2O. It participates in carbohydrate degradation; glycolysis; pyruvate from D-glyceraldehyde 3-phosphate: step 4/5. This chain is Enolase 1 (ENO1), found in Saccharomyces cerevisiae (strain ATCC 204508 / S288c) (Baker's yeast).